Reading from the N-terminus, the 796-residue chain is DnaJ homolog subfamily C member 10 (796 aa).

The N-terminal stretch at 1–33 (MKHSLNTATSSSSVLKRTILYLVLISLAALVYC) is a signal peptide. The region spanning 36–100 (DYYDLLGVSK…DLRKKYDKYG (65 aa)) is the J domain. Positions 131–233 (EIITLDRGEF…ERLVNFAMPY (103 aa)) constitute a Thioredoxin 1 domain. A disulfide bond links Cys-159 and Cys-162. Trxb regions lie at residues 236 to 351 (STVT…LPDL) and 349 to 464 (PDLE…PTNF). Thioredoxin domains follow at residues 455–554 (HVIT…IEDL), 558–668 (SVVT…ALMY), and 672–780 (ASFD…ITKR). A disulfide bridge connects residues Cys-481 and Cys-484. N-linked (GlcNAc...) asparagine glycosylation occurs at Asn-531. Cystine bridges form between Cys-589/Cys-592 and Cys-701/Cys-704. Asn-753 carries an N-linked (GlcNAc...) asparagine glycan. A Prevents secretion from ER motif is present at residues 793 to 796 (KDEL).

Its subcellular location is the endoplasmic reticulum lumen. Its function is as follows. Endoplasmic reticulum disulfide reductase involved both in the correct folding of proteins and degradation of misfolded proteins. Required for efficient folding of proteins in the endoplasmic reticulum by catalyzing the removal of non-native disulfide bonds formed during the folding of proteins. Also involved in endoplasmic reticulum-associated degradation (ERAD) by reducing incorrect disulfide bonds in misfolded glycoproteins. The chain is DnaJ homolog subfamily C member 10 (dnajc10) from Xenopus laevis (African clawed frog).